A 129-amino-acid chain; its full sequence is Small ribosomal subunit protein uS11 (129 aa).

It belongs to the universal ribosomal protein uS11 family. As to quaternary structure, part of the 30S ribosomal subunit. Interacts with proteins S7 and S18. Binds to IF-3.

In terms of biological role, located on the platform of the 30S subunit, it bridges several disparate RNA helices of the 16S rRNA. Forms part of the Shine-Dalgarno cleft in the 70S ribosome. In Sodalis glossinidius (strain morsitans), this protein is Small ribosomal subunit protein uS11.